The chain runs to 1038 residues: Activated CDC42 kinase 1 (1038 aa).

Positions 1–110 (MQPEEGTGWL…TSPAPGGPAG (110 aa)) are SAM-like domain. Residues 90-114 (PPHHSQSTFRKTSPAPGGPAGEGPL) form a disordered region. One can recognise a Protein kinase domain in the interval 126–385 (LRLLEKLGDG…PTFVALRDFL (260 aa)). Residues 132–140 (LGDGSFGVV) and K158 each bind ATP. D252 functions as the Proton acceptor in the catalytic mechanism. A Phosphotyrosine; by SRC and autocatalysis modification is found at Y284. The region spanning 388-448 (AQPTDMRALQ…PRNVVTSVAG (61 aa)) is the SH3 domain. The 13-residue stretch at 454–466 (ISQPLQNSFIHTG) folds into the CRIB domain. The segment at 497–535 (LSVELSTSRPPQHLGGVKKPTYDPVSEDQDPLSSDFKRL) is disordered. Y518 carries the post-translational modification Phosphotyrosine. The tract at residues 623–652 (DWDARPLPPPPAYDDVAQDEDDFEICSINS) is required for interaction with SRC. The required for interaction with NEDD4 stretch occupies residues 632 to 635 (PPAY). Disordered stretches follow at residues 659–702 (VPAG…SSAQ) and 718–840 (LQAP…GPRA). A Phosphoserine modification is found at S724. An EBD domain region spans residues 733–876 (GDDKPQVPPR…SYLERYQRFL (144 aa)). 3 stretches are compositionally biased toward pro residues: residues 738-749 (QVPPRVPIPPRP), 772-783 (PASPPRVPPREP), and 794-805 (PLVPPGSSPLPP). Y827 carries the post-translational modification Phosphotyrosine. Residue R839 is modified to Omega-N-methylarginine. Phosphotyrosine is present on residues Y859 and Y872. Position 881 is a phosphoserine (S881). The segment at 917–957 (LDPKANFSTNNSNPGARPPPPRATARLPQRGCPGDGPEAGR) is disordered. Positions 958–996 (PADKIQMAMVHGVTTEECQAALQCHGWSVQRAAQYLKVE) constitute a UBA domain.

Belongs to the protein kinase superfamily. Tyr protein kinase family. As to quaternary structure, interacts with NEDD4 (via WW3 domain). NEDD4L and EGF promote association with NEDD4. Homodimer. Interacts with AR, CDC42, WWASL and WWOX. Interacts with CSPG4 (activated). Interacts with MERTK (activated); stimulates autophosphorylation. May interact (phosphorylated) with HSP90AB1; maintains kinase activity. Interacts with NPHP1. Interacts with SNX9 (via SH3 domain). Interacts with SRC (via SH2 and SH3 domain). Interacts with EGFR, and this interaction is dependent on EGF stimulation and kinase activity of EGFR. Interacts (via kinase domain) with AKT1. Part of a collagen stimulated complex involved in cell migration composed of CDC42, CRK, TNK2 and BCAR1/p130cas. Interacts with BCAR1/p130cas via SH3 domains. Forms complexes with GRB2 and numerous receptor tyrosine kinases (RTK) including LTK, AXL or PDGFRL, in which GRB2 promotes RTK recruitment by TNK2. Mg(2+) is required as a cofactor. Autophosphorylation regulates kinase activity. Phosphorylation on Tyr-518 is required for interaction with SRC and is observed during association with clathrin-coated pits. Post-translationally, polyubiquitinated by NEDD4 and NEDD4L. Degradation can be induced by EGF and is lysosome-dependent. As to expression, the Tyr-284 phosphorylated form shows a significant increase in expression in breast cancers during the progressive stages i.e. normal to hyperplasia (ADH), ductal carcinoma in situ (DCIS), invasive ductal carcinoma (IDC) and lymph node metastatic (LNMM) stages. It also shows a significant increase in expression in prostate cancers during the progressive stages.

Its subcellular location is the cell membrane. It is found in the nucleus. The protein localises to the endosome. It localises to the cell junction. The protein resides in the adherens junction. Its subcellular location is the cytoplasmic vesicle membrane. It is found in the cytoplasmic vesicle. The protein localises to the clathrin-coated vesicle. It localises to the membrane. The protein resides in the clathrin-coated pit. Its subcellular location is the cytoplasm. It is found in the perinuclear region. The protein localises to the cytosol. It carries out the reaction L-tyrosyl-[protein] + ATP = O-phospho-L-tyrosyl-[protein] + ADP + H(+). The enzyme catalyses L-seryl-[protein] + ATP = O-phospho-L-seryl-[protein] + ADP + H(+). It catalyses the reaction L-threonyl-[protein] + ATP = O-phospho-L-threonyl-[protein] + ADP + H(+). Its activity is regulated as follows. Inhibited by AIM-100 (4-amino-5,6-biaryl-furo[2,3-d]pyrimidine), which suppresses activating phosphorylation at Tyr-284. Repressed by dasatinib. Functionally, non-receptor tyrosine-protein and serine/threonine-protein kinase that is implicated in cell spreading and migration, cell survival, cell growth and proliferation. Transduces extracellular signals to cytosolic and nuclear effectors. Phosphorylates AKT1, AR, MCF2, WASL and WWOX. Implicated in trafficking and clathrin-mediated endocytosis through binding to epidermal growth factor receptor (EGFR) and clathrin. Binds to both poly- and mono-ubiquitin and regulates ligand-induced degradation of EGFR, thereby contributing to the accumulation of EGFR at the limiting membrane of early endosomes. Downstream effector of CDC42 which mediates CDC42-dependent cell migration via phosphorylation of BCAR1. May be involved both in adult synaptic function and plasticity and in brain development. Activates AKT1 by phosphorylating it on 'Tyr-176'. Phosphorylates AR on 'Tyr-267' and 'Tyr-363' thereby promoting its recruitment to androgen-responsive enhancers (AREs). Phosphorylates WWOX on 'Tyr-287'. Phosphorylates MCF2, thereby enhancing its activity as a guanine nucleotide exchange factor (GEF) toward Rho family proteins. Contributes to the control of AXL receptor levels. Confers metastatic properties on cancer cells and promotes tumor growth by negatively regulating tumor suppressor such as WWOX and positively regulating pro-survival factors such as AKT1 and AR. Phosphorylates WASP. In Homo sapiens (Human), this protein is Activated CDC42 kinase 1 (TNK2).